A 31-amino-acid polypeptide reads, in one-letter code: Delta-actitoxin-Dar1b (31 aa).

This sequence belongs to the sea anemone short toxin (type III) family. Contains 4 disulfide bonds.

It localises to the secreted. The protein localises to the nematocyst. In terms of biological role, binds specifically to voltage-gated sodium channels (Nav), thereby delaying their inactivation during signal transduction. This chain is Delta-actitoxin-Dar1b, found in Dofleinia armata (Armed anemone).